We begin with the raw amino-acid sequence, 259 residues long: Putative hydro-lyase Rxyl_2409 (259 aa).

A disordered region spans residues 1-24 (MGAPGAAEARERIRRGEHAGPTAG). Basic and acidic residues predominate over residues 8-18 (EARERIRRGEH).

Belongs to the D-glutamate cyclase family.

The sequence is that of Putative hydro-lyase Rxyl_2409 from Rubrobacter xylanophilus (strain DSM 9941 / JCM 11954 / NBRC 16129 / PRD-1).